We begin with the raw amino-acid sequence, 117 residues long: Large ribosomal subunit protein bL20c (117 aa).

Belongs to the bacterial ribosomal protein bL20 family.

It localises to the plastid. The protein resides in the chloroplast. In terms of biological role, binds directly to 23S ribosomal RNA and is necessary for the in vitro assembly process of the 50S ribosomal subunit. It is not involved in the protein synthesizing functions of that subunit. This chain is Large ribosomal subunit protein bL20c, found in Phalaenopsis aphrodite subsp. formosana (Moth orchid).